The chain runs to 23 residues: Unknown protein NF005 from 2D-PAGE (23 aa).

Residues 1-23 are disordered; the sequence is AGKARKQLSKNEDTKLKEQYIXD. Positions 9 to 23 are enriched in basic and acidic residues; it reads SKNEDTKLKEQYIXD.

The polypeptide is Unknown protein NF005 from 2D-PAGE (Naegleria fowleri (Brain eating amoeba)).